The primary structure comprises 239 residues: 2,3,4,5-tetrahydropyridine-2,6-dicarboxylate N-acetyltransferase (239 aa).

The protein belongs to the transferase hexapeptide repeat family. DapH subfamily.

The enzyme catalyses (S)-2,3,4,5-tetrahydrodipicolinate + acetyl-CoA + H2O = L-2-acetamido-6-oxoheptanedioate + CoA. The protein operates within amino-acid biosynthesis; L-lysine biosynthesis via DAP pathway; LL-2,6-diaminopimelate from (S)-tetrahydrodipicolinate (acetylase route): step 1/3. Functionally, catalyzes the transfer of an acetyl group from acetyl-CoA to tetrahydrodipicolinate. The protein is 2,3,4,5-tetrahydropyridine-2,6-dicarboxylate N-acetyltransferase of Staphylococcus saprophyticus subsp. saprophyticus (strain ATCC 15305 / DSM 20229 / NCIMB 8711 / NCTC 7292 / S-41).